The sequence spans 241 residues: Probable transcriptional regulatory protein H16_A0916 (241 aa).

This sequence belongs to the TACO1 family.

Its subcellular location is the cytoplasm. The chain is Probable transcriptional regulatory protein H16_A0916 from Cupriavidus necator (strain ATCC 17699 / DSM 428 / KCTC 22496 / NCIMB 10442 / H16 / Stanier 337) (Ralstonia eutropha).